The primary structure comprises 658 residues: UvrABC system protein B (658 aa).

The Helicase ATP-binding domain occupies 25-416 (KSLKNNNHYQ…QKNVAEQIIR (392 aa)). 38–45 (GVTGSGKT) is an ATP binding site. Positions 91 to 114 (HFDYYQPESYIPRRDLFIEKDSSI) match the Beta-hairpin motif. The Helicase C-terminal domain occupies 433–607 (QVQDLFDEIK…ELKLRDDEIK (175 aa)). In terms of domain architecture, UVR spans 623–658 (EKIIKELDKKMRERAKNLDFEEAMRLRDEIAQLRTL).

This sequence belongs to the UvrB family. In terms of assembly, forms a heterotetramer with UvrA during the search for lesions. Interacts with UvrC in an incision complex.

Its subcellular location is the cytoplasm. The UvrABC repair system catalyzes the recognition and processing of DNA lesions. A damage recognition complex composed of 2 UvrA and 2 UvrB subunits scans DNA for abnormalities. Upon binding of the UvrA(2)B(2) complex to a putative damaged site, the DNA wraps around one UvrB monomer. DNA wrap is dependent on ATP binding by UvrB and probably causes local melting of the DNA helix, facilitating insertion of UvrB beta-hairpin between the DNA strands. Then UvrB probes one DNA strand for the presence of a lesion. If a lesion is found the UvrA subunits dissociate and the UvrB-DNA preincision complex is formed. This complex is subsequently bound by UvrC and the second UvrB is released. If no lesion is found, the DNA wraps around the other UvrB subunit that will check the other stand for damage. In Helicobacter pylori (strain J99 / ATCC 700824) (Campylobacter pylori J99), this protein is UvrABC system protein B.